We begin with the raw amino-acid sequence, 367 residues long: tRNA (guanine(26)-N(2))-dimethyltransferase (367 aa).

In terms of domain architecture, Trm1 methyltransferase spans 1-365; the sequence is MRVSEGRVTV…ADVVEIREAT (365 aa). S-adenosyl-L-methionine-binding residues include R34, R64, D79, D105, and A106. Residues C234, C237, C254, and C257 each coordinate Zn(2+).

Belongs to the class I-like SAM-binding methyltransferase superfamily. Trm1 family.

The catalysed reaction is guanosine(26) in tRNA + 2 S-adenosyl-L-methionine = N(2)-dimethylguanosine(26) in tRNA + 2 S-adenosyl-L-homocysteine + 2 H(+). In terms of biological role, dimethylates a single guanine residue at position 26 of a number of tRNAs using S-adenosyl-L-methionine as donor of the methyl groups. The sequence is that of tRNA (guanine(26)-N(2))-dimethyltransferase from Haloarcula marismortui (strain ATCC 43049 / DSM 3752 / JCM 8966 / VKM B-1809) (Halobacterium marismortui).